The primary structure comprises 109 residues: QNRQCCESNLEPLFSGYIETLRREAECAEADSGRLSSELNSLQEVLEGYKRRYEEEVALRATAENEFVALKKDVDCAYLRKSDLEANVEALIQETDFLRRLYEEEIRVL.

Residues 1 to 10 (QNRQCCESNL) are linker 1. In terms of domain architecture, IF rod spans 1–109 (QNRQCCESNL…RLYEEEIRVL (109 aa)). The segment at 11–109 (EPLFSGYIET…RLYEEEIRVL (99 aa)) is coil 1B.

This sequence belongs to the intermediate filament family.

Wool microfibrillar keratin. The protein is Keratin, type II microfibrillar of Ovis aries (Sheep).